The chain runs to 242 residues: MQKHNIKLNQNQDISQLFHDEVPLFDNSITSKDKEVIETLSEIYSIVITLDHVEKAYLKDSIDDTQYTNTVDKLLKQFKVYLNSQNKEEINKHFQSIEAFCDTYNITASNAITRLERGIPITAEHAISTTTSAPSGDNKQSSSSDKKFNAKYVAEATGNFITVMDALKLNYNAKDQLHPLLAELLISINRVTRDDFENRSKLIDWIVRINKLSIGDTLTETQIRELLFDLELAYKSFYALLD.

The VPS28 N-terminal domain maps to 11-125 (NQDISQLFHD…ERGIPITAEH (115 aa)). Residues 148 to 242 (FNAKYVAEAT…AYKSFYALLD (95 aa)) enclose the VPS28 C-terminal domain. Residues 148–242 (FNAKYVAEAT…AYKSFYALLD (95 aa)) form an interaction with VSP36 and VPS20 region.

This sequence belongs to the VPS28 family. As to quaternary structure, component of the ESCRT-I complex (endosomal sorting complex required for transport I) which consists of STP22, VPS28, SRN2 and MVB12 in a 1:1:1:1 stoichiometry. Self-associates. Interacts with VPS27; the interaction mediates the association with the ESCRT-0 complex. Interacts with VPS20; the interaction mediates the association with the ESCRT-III complex.

Its subcellular location is the cytoplasm. It localises to the endosome. The protein resides in the late endosome membrane. Its function is as follows. Component of the ESCRT-I complex, a regulator of vesicular trafficking process. Required for normal endocytic and biosynthetic traffic to the yeast vacuole. The protein is Vacuolar protein sorting-associated protein 28 (VPS28) of Saccharomyces cerevisiae (strain ATCC 204508 / S288c) (Baker's yeast).